We begin with the raw amino-acid sequence, 282 residues long: MSNKTIGLGSIEIANDKPFVLFGGMNVLESRDLAMKIAETYAETTQKLGIPYVFKASFDKANRSSVNSYRGPGMEEGLKIFEEIKSTFNLPLITDVHEIHQCAPVAEVVDIIQLPAFLARQTDLVVAMAKTGAIINVKKPQFLAPHEMRHIITKFNEAGNDEIILCERGSSFGYNNLVVDMLGMDEMKQTGYPVIFDATHALQRPGGRADSAGGRRAQATELARSGMALGLAGLFIEAHPDPDNAKCDGPCALPLHQLEAYLTQMKAVDDLVKSFDAIDTSK.

This sequence belongs to the KdsA family.

Its subcellular location is the cytoplasm. The enzyme catalyses D-arabinose 5-phosphate + phosphoenolpyruvate + H2O = 3-deoxy-alpha-D-manno-2-octulosonate-8-phosphate + phosphate. The protein operates within carbohydrate biosynthesis; 3-deoxy-D-manno-octulosonate biosynthesis; 3-deoxy-D-manno-octulosonate from D-ribulose 5-phosphate: step 2/3. It functions in the pathway bacterial outer membrane biogenesis; lipopolysaccharide biosynthesis. This Shewanella woodyi (strain ATCC 51908 / MS32) protein is 2-dehydro-3-deoxyphosphooctonate aldolase.